The chain runs to 322 residues: Cytochrome f (322 aa).

An N-terminal signal peptide occupies residues 1-37 (MQNRKTYAYDWIKKWMIKSISTLIIINTMVWSSVSEA). 4 residues coordinate heme: tyrosine 38, cysteine 58, cysteine 61, and histidine 62. The chain crosses the membrane as a helical span at residues 285 to 307 (VLRVQGLLLFFASVILAQIFLVL).

This sequence belongs to the cytochrome f family. In terms of assembly, the 4 large subunits of the cytochrome b6-f complex are cytochrome b6, subunit IV (17 kDa polypeptide, petD), cytochrome f and the Rieske protein, while the 4 small subunits are PetG, PetL, PetM and PetN. The complex functions as a dimer. It depends on heme as a cofactor.

The protein resides in the plastid. It localises to the chloroplast thylakoid membrane. In terms of biological role, component of the cytochrome b6-f complex, which mediates electron transfer between photosystem II (PSII) and photosystem I (PSI), cyclic electron flow around PSI, and state transitions. This Anthoceros angustus (Hornwort) protein is Cytochrome f (petA).